Here is a 1041-residue protein sequence, read N- to C-terminus: Integrator complex subunit 3 (1041 aa).

M1 is subject to N-acetylmethionine. Phosphoserine is present on residues S500, S535, and S993. The tract at residues 975–1041 (YEDSSTKPPK…GSSAVGSDSD (67 aa)) is disordered. Residues 1006 to 1020 (AEEESGSSSASEEED) show a composition bias toward acidic residues.

Belongs to the Integrator subunit 3 family. In terms of assembly, component of the Integrator complex, composed of core subunits INTS1, INTS2, INTS3, INTS4, INTS5, INTS6, INTS7, INTS8, INTS9/RC74, INTS10, INTS11/CPSF3L, INTS12, INTS13, INTS14 and INTS15. The core complex associates with protein phosphatase 2A subunits PPP2CA and PPP2R1A, to form the Integrator-PP2A (INTAC) complex. Component of the SOSS complex, composed of SOSS-B (SOSS-B1/NABP2 or SOSS-B2/NABP1), SOSS-A/INTS3 and SOSS-C/INIP. SOSS complexes containing SOSS-B1/NABP2 are more abundant than complexes containing SOSS-B2/NABP1. Interacts with SOSS-B1/NABP2, SOSS-B2/NABP1 and SOSS-C/INIP; the interaction is direct. Interacts with NBN/NBS1.

The protein resides in the nucleus. It is found in the cytoplasm. Its function is as follows. Component of the integrator complex, a multiprotein complex that terminates RNA polymerase II (Pol II) transcription in the promoter-proximal region of genes. The integrator complex provides a quality checkpoint during transcription elongation by driving premature transcription termination of transcripts that are unfavorably configured for transcriptional elongation: the complex terminates transcription by (1) catalyzing dephosphorylation of the C-terminal domain (CTD) of Pol II subunit POLR2A/RPB1 and SUPT5H/SPT5, (2) degrading the exiting nascent RNA transcript via endonuclease activity and (3) promoting the release of Pol II from bound DNA. The integrator complex is also involved in terminating the synthesis of non-coding Pol II transcripts, such as enhancer RNAs (eRNAs), small nuclear RNAs (snRNAs), telomerase RNAs and long non-coding RNAs (lncRNAs). Within the integrator complex, INTS3 is involved in the post-termination step: INTS3 binds INTS7 in the open conformation of integrator complex and prevents the rebinding of Pol II to the integrator after termination cycle. Mediates recruitment of cytoplasmic dynein to the nuclear envelope, probably as component of the integrator complex. Component of the SOSS complex, a multiprotein complex that functions downstream of the MRN complex to promote DNA repair and G2/M checkpoint. The SOSS complex associates with single-stranded DNA at DNA lesions and influences diverse endpoints in the cellular DNA damage response including cell-cycle checkpoint activation, recombinational repair and maintenance of genomic stability. The SOSS complex is required for efficient homologous recombination-dependent repair of double-strand breaks (DSBs) and ATM-dependent signaling pathways. In the SOSS complex, it is required for the assembly of the complex and for stabilization of the complex at DNA damage sites. In Mus musculus (Mouse), this protein is Integrator complex subunit 3 (Ints3).